Reading from the N-terminus, the 213-residue chain is MSDNNQCVIVGIAGASASGKSLIASTIYNELRAKVGDHQIGVITEDCYYNDQSHLSMEERVKTNYDHPSALDHDLLCEHLEKLVRGEAVEVPEYSYTEHTRTSNTTTMTPKKVIILEGILLLTDPRLRDLMHATVFMDTPLDICLLRRVKRDVEERGRTMESVLKQYQQTVRPMFMQFIEPSKQYADIIVPRGGKNRIAIDVLKAHIAKLLKA.

14-21 (GASASGKS) provides a ligand contact to ATP.

This sequence belongs to the uridine kinase family.

It is found in the cytoplasm. The enzyme catalyses uridine + ATP = UMP + ADP + H(+). It catalyses the reaction cytidine + ATP = CMP + ADP + H(+). Its pathway is pyrimidine metabolism; CTP biosynthesis via salvage pathway; CTP from cytidine: step 1/3. It participates in pyrimidine metabolism; UMP biosynthesis via salvage pathway; UMP from uridine: step 1/1. The sequence is that of Uridine kinase from Vibrio parahaemolyticus serotype O3:K6 (strain RIMD 2210633).